Here is a 69-residue protein sequence, read N- to C-terminus: Large ribosomal subunit protein bL28 (69 aa).

The protein belongs to the bacterial ribosomal protein bL28 family.

This chain is Large ribosomal subunit protein bL28, found in Oleidesulfovibrio alaskensis (strain ATCC BAA-1058 / DSM 17464 / G20) (Desulfovibrio alaskensis).